We begin with the raw amino-acid sequence, 1809 residues long: Stereocilin (1809 aa).

The signal sequence occupies residues 1-22; the sequence is MALSLQPQLLLLLSLLPQEVTS. N-linked (GlcNAc...) asparagine glycosylation is found at Asn-63, Asn-200, Asn-295, Asn-352, and Asn-364. The disordered stretch occupies residues 376–426; it reads PATPRPPPTTPRPPPTTPQPPPTTTQPIPDTTQPPPVTPRPPPTTPQPPPS. Composition is skewed to pro residues over residues 378 to 399 and 407 to 426; these read TPRP…PPTT and TQPP…PPPS. 10 N-linked (GlcNAc...) asparagine glycosylation sites follow: Asn-467, Asn-516, Asn-580, Asn-605, Asn-696, Asn-860, Asn-952, Asn-1000, Asn-1213, and Asn-1308.

This sequence belongs to the stereocilin family. Strongly expressed in the inner ear, detected in the testis, and barely detected in the eye. Detected in the six sensory areas of the inner ear by immunofluorescence. Expressed only in the sensory hair cells and associated with the stereocilia, the stiff microvilli forming the structure for mechanoreception of sound stimulation.

It is found in the cell surface. Its subcellular location is the cell projection. The protein resides in the kinocilium. It localises to the stereocilium. Essential to the formation of horizontal top connectors between outer hair cell stereocilia. The chain is Stereocilin (Strc) from Mus musculus (Mouse).